The following is a 113-amino-acid chain: Probable 4-amino-4-deoxy-L-arabinose-phosphoundecaprenol flippase subunit ArnE (113 aa).

Transmembrane regions (helical) follow at residues Ser37–Leu57, Ile62–Ala82, and Ala91–Leu111. In terms of domain architecture, EamA spans Ala45–Leu111.

The protein belongs to the ArnE family. As to quaternary structure, heterodimer of ArnE and ArnF.

It localises to the cell inner membrane. The protein operates within bacterial outer membrane biogenesis; lipopolysaccharide biosynthesis. In terms of biological role, translocates 4-amino-4-deoxy-L-arabinose-phosphoundecaprenol (alpha-L-Ara4N-phosphoundecaprenol) from the cytoplasmic to the periplasmic side of the inner membrane. The chain is Probable 4-amino-4-deoxy-L-arabinose-phosphoundecaprenol flippase subunit ArnE from Photorhabdus laumondii subsp. laumondii (strain DSM 15139 / CIP 105565 / TT01) (Photorhabdus luminescens subsp. laumondii).